We begin with the raw amino-acid sequence, 156 residues long: Small ribosomal subunit protein uS7 (156 aa).

It belongs to the universal ribosomal protein uS7 family. As to quaternary structure, part of the 30S ribosomal subunit. Contacts proteins S9 and S11.

In terms of biological role, one of the primary rRNA binding proteins, it binds directly to 16S rRNA where it nucleates assembly of the head domain of the 30S subunit. Is located at the subunit interface close to the decoding center, probably blocks exit of the E-site tRNA. The sequence is that of Small ribosomal subunit protein uS7 from Clostridium tetani (strain Massachusetts / E88).